We begin with the raw amino-acid sequence, 198 residues long: FMN-dependent NADH:quinone oxidoreductase (198 aa).

92–95 (MWNL) is an FMN binding site.

Belongs to the azoreductase type 1 family. Homodimer. Requires FMN as cofactor.

It carries out the reaction 2 a quinone + NADH + H(+) = 2 a 1,4-benzosemiquinone + NAD(+). It catalyses the reaction N,N-dimethyl-1,4-phenylenediamine + anthranilate + 2 NAD(+) = 2-(4-dimethylaminophenyl)diazenylbenzoate + 2 NADH + 2 H(+). Quinone reductase that provides resistance to thiol-specific stress caused by electrophilic quinones. Functionally, also exhibits azoreductase activity. Catalyzes the reductive cleavage of the azo bond in aromatic azo compounds to the corresponding amines. The sequence is that of FMN-dependent NADH:quinone oxidoreductase from Clostridium beijerinckii (strain ATCC 51743 / NCIMB 8052) (Clostridium acetobutylicum).